The following is a 160-amino-acid chain: Transcription elongation factor GreB (160 aa).

It belongs to the GreA/GreB family. GreB subfamily.

In terms of biological role, necessary for efficient RNA polymerase transcription elongation past template-encoded arresting sites. The arresting sites in DNA have the property of trapping a certain fraction of elongating RNA polymerases that pass through, resulting in locked ternary complexes. Cleavage of the nascent transcript by cleavage factors such as GreA or GreB allows the resumption of elongation from the new 3'terminus. GreB releases sequences of up to 9 nucleotides in length. In Vibrio vulnificus (strain YJ016), this protein is Transcription elongation factor GreB.